We begin with the raw amino-acid sequence, 292 residues long: UPF0749 protein Mb1856 (292 aa).

An N-terminal signal peptide occupies residues 1-28 (MSENRPEPVAAETSAATTARHSQADAGA). Positions 1–30 (MSENRPEPVAAETSAATTARHSQADAGAHD) are disordered. 3 helical membrane passes run 68-88 (VFGTLAILLCLVLGVAIVTQV), 152-172 (AALSILVGAVGATGPGVMITI), and 229-249 (VLSPPYSILAIGDPPTLAAAM).

The protein belongs to the UPF0749 family.

The protein localises to the cell membrane. The protein is UPF0749 protein Mb1856 of Mycobacterium bovis (strain ATCC BAA-935 / AF2122/97).